The sequence spans 165 residues: Choriogonadotropin subunit beta (165 aa).

A signal peptide spans 1 to 20; that stretch reads METLQGLLLWLLLSMGGAQA. 6 disulfides stabilise this stretch: Cys29–Cys77, Cys43–Cys92, Cys46–Cys130, Cys54–Cys108, Cys58–Cys110, and Cys113–Cys120. N-linked (GlcNAc...) asparagine glycosylation is found at Asn33 and Asn50. Positions 131–165 are disordered; sequence DDPNLQASSSSKDPPPSPPSPSRLLEPAGTPFLPQ. O-linked (GalNAc...) serine glycans are attached at residues Ser141, Ser147, and Ser152.

This sequence belongs to the glycoprotein hormones subunit beta family. In terms of assembly, heterodimer of a common alpha chain and a unique beta chain which confers biological specificity to thyrotropin, lutropin, follitropin and gonadotropin. As to expression, placenta.

It is found in the secreted. Its function is as follows. Stimulates the ovaries to synthesize the steroids that are essential for the maintenance of pregnancy. The polypeptide is Choriogonadotropin subunit beta (CGB) (Papio anubis (Olive baboon)).